Reading from the N-terminus, the 787-residue chain is MASFIDLFAGDITTQLLKLLALVANTVYSCKGIAERLITMIRDVQPTIREIQYSGAELSNHHQTQLGVFYEILEKARKLCEKVLRCNRWNLKHVYHANKMKDLEKQISRFLNSQILLFVLAEVCHLRVNGDRIERNMDRLLTERNDSLSFPETMMEIETVSDPEIQTVLELGKKKVKEMMFKFTDTHLFGISGMSGSGKTTLAIELSKDDDVRGLFKNKVLFLTVSRSPNFENLESCIREFLYDGVHQRKLVILDDVWTRESLDRLMSKIRGSTTLVVSRSKLADPRTTYNVELLKKDEAMSLLCLCAFEQKSPPSPFNKYLVKQVVDECKGLPLSLKVLGASLKNKPERYWEGVVKRLLRGEAADETHESRVFAHMEESLENLDPKIRDCFLDMGAFPEDKKIPLDLLTSVWVERHDIDEETAFSFVLRLADKNLLTIVNNPRFGDVHIGYYDVFVTQHDVLRDLALHMSNRVDVNRRERLLMPKTEPVLPREWEKNKDEPFDAKIVSLHTGEMDEMNWFDMDLPKAEVLILNFSSDNYVLPPFIGKMSRLRVLVIINNGMSPARLHGFSIFANLAKLRSLWLKRVHVPELTSCTIPLKNLHKIHLIFCKVKNSFVQTSFDISKIFPSLSDLTIDHCDDLLELKSIFGITSLNSLSITNCPRILELPKNLSNVQSLERLRLYACPELISLPVEVCELPCLKYVDISQCVSLVSLPEKFGKLGSLEKIDMRECSLLGLPSSVAALVSLRHVICDEETSSMWEMVKKVVPELCIEVAKKCFTVDWLDD.

The 149-residue stretch at Met-1–Ser-149 folds into the RPW8 domain. Positions His-96–Asn-112 form a coiled coil. An ATP-binding site is contributed by Gly-193 to Thr-200. In terms of domain architecture, NB-ARC spans His-247–Val-414. LRR repeat units follow at residues Met-549–Asn-575, Leu-576–Leu-599, Ile-650–Val-674, and Leu-722–Leu-745.

The protein belongs to the disease resistance NB-LRR family.

Functionally, disease resistance (R) protein that mediates resistance against Hyaloperonospora parasitica in a salicylic acid-dependent manner. Also mediates resistance against Erysiphe cichoracearum is both salicylic acid-dependent and partially NPR1-dependent. Resistance proteins guard the plant against pathogens that contain an appropriate avirulence protein via an indirect interaction with this avirulence protein. That triggers a defense system including the hypersensitive response, which restricts the pathogen growth. This Arabidopsis thaliana (Mouse-ear cress) protein is Disease resistance protein ADR1 (ADR1).